Consider the following 121-residue polypeptide: Small ribosomal subunit protein uS13 (121 aa).

The tract at residues 91 to 121 (HRMSLPVRGQRTRTNARTRRGSRKTVAGRKK) is disordered. Positions 100–121 (QRTRTNARTRRGSRKTVAGRKK) are enriched in basic residues.

This sequence belongs to the universal ribosomal protein uS13 family. As to quaternary structure, part of the 30S ribosomal subunit. Forms a loose heterodimer with protein S19. Forms two bridges to the 50S subunit in the 70S ribosome.

In terms of biological role, located at the top of the head of the 30S subunit, it contacts several helices of the 16S rRNA. In the 70S ribosome it contacts the 23S rRNA (bridge B1a) and protein L5 of the 50S subunit (bridge B1b), connecting the 2 subunits; these bridges are implicated in subunit movement. Contacts the tRNAs in the A and P-sites. This is Small ribosomal subunit protein uS13 from Prochlorococcus marinus (strain MIT 9515).